The chain runs to 380 residues: 3-dehydroquinate synthase (380 aa).

This sequence belongs to the archaeal-type DHQ synthase family.

It catalyses the reaction 2-amino-2,3,7-trideoxy-D-lyxo-hept-6-ulosonate + NAD(+) + H2O = 3-dehydroquinate + NH4(+) + NADH + H(+). Functionally, catalyzes the oxidative deamination and cyclization of 2-amino-3,7-dideoxy-D-threo-hept-6-ulosonic acid (ADH) to yield 3-dehydroquinate (DHQ), which is fed into the canonical shikimic pathway of aromatic amino acid biosynthesis. This Methanosarcina acetivorans (strain ATCC 35395 / DSM 2834 / JCM 12185 / C2A) protein is 3-dehydroquinate synthase.